The sequence spans 336 residues: Fructose-1,6-bisphosphatase class 1 (336 aa).

Positions 92, 115, 117, and 118 each coordinate Mg(2+). Substrate contacts are provided by residues 118–121, asparagine 211, tyrosine 244, 262–264, and lysine 274; these read DGSS and YLY. Position 280 (glutamate 280) interacts with Mg(2+).

This sequence belongs to the FBPase class 1 family. Homotetramer. Mg(2+) serves as cofactor.

The protein localises to the cytoplasm. The catalysed reaction is beta-D-fructose 1,6-bisphosphate + H2O = beta-D-fructose 6-phosphate + phosphate. It functions in the pathway carbohydrate biosynthesis; gluconeogenesis. This chain is Fructose-1,6-bisphosphatase class 1, found in Aliivibrio fischeri (strain ATCC 700601 / ES114) (Vibrio fischeri).